We begin with the raw amino-acid sequence, 325 residues long: Tetraacyldisaccharide 4'-kinase (325 aa).

Position 58 to 65 (Thr58 to Thr65) interacts with ATP.

It belongs to the LpxK family.

The enzyme catalyses a lipid A disaccharide + ATP = a lipid IVA + ADP + H(+). It functions in the pathway glycolipid biosynthesis; lipid IV(A) biosynthesis; lipid IV(A) from (3R)-3-hydroxytetradecanoyl-[acyl-carrier-protein] and UDP-N-acetyl-alpha-D-glucosamine: step 6/6. In terms of biological role, transfers the gamma-phosphate of ATP to the 4'-position of a tetraacyldisaccharide 1-phosphate intermediate (termed DS-1-P) to form tetraacyldisaccharide 1,4'-bis-phosphate (lipid IVA). This is Tetraacyldisaccharide 4'-kinase from Coxiella burnetii (strain RSA 331 / Henzerling II).